The following is a 424-amino-acid chain: Histidinol dehydrogenase (424 aa).

3 residues coordinate NAD(+): Y127, Q188, and N211. Substrate is bound by residues S234, Q256, and H259. Zn(2+) is bound by residues Q256 and H259. Catalysis depends on proton acceptor residues E322 and H323. Residues H323, D356, E410, and H415 each contribute to the substrate site. D356 contributes to the Zn(2+) binding site. H415 is a binding site for Zn(2+).

It belongs to the histidinol dehydrogenase family. Zn(2+) serves as cofactor.

The catalysed reaction is L-histidinol + 2 NAD(+) + H2O = L-histidine + 2 NADH + 3 H(+). It participates in amino-acid biosynthesis; L-histidine biosynthesis; L-histidine from 5-phospho-alpha-D-ribose 1-diphosphate: step 9/9. Its function is as follows. Catalyzes the sequential NAD-dependent oxidations of L-histidinol to L-histidinaldehyde and then to L-histidine. The polypeptide is Histidinol dehydrogenase (Methanococcus maripaludis (strain DSM 14266 / JCM 13030 / NBRC 101832 / S2 / LL)).